The following is a 218-amino-acid chain: MSVVVKICGLSTCDTLEAAVAAGADMVGFVFFPASPRHVGLDVARELSDQVGSRAAKVALTVDASDALIRDIVEILKPDLLQLHGSESPERVRALKQAFGLPVMKAIAVATAADLAMLPAYAETADRILFDARPPKDATRPGGLGMTFDWELLRDLDLSLPFMVSGGVNPGNVAAALRVTGAGGVDVSSGVERAPGAKDPELIRSFIRAARASEELMT.

This sequence belongs to the TrpF family.

It carries out the reaction N-(5-phospho-beta-D-ribosyl)anthranilate = 1-(2-carboxyphenylamino)-1-deoxy-D-ribulose 5-phosphate. The protein operates within amino-acid biosynthesis; L-tryptophan biosynthesis; L-tryptophan from chorismate: step 3/5. The protein is N-(5'-phosphoribosyl)anthranilate isomerase of Rhodopseudomonas palustris (strain BisB5).